The sequence spans 222 residues: Isoprenyl transferase (222 aa).

The active site involves aspartate 12. Aspartate 12 provides a ligand contact to Mg(2+). Substrate-binding positions include 13–16, tryptophan 17, and 57–59; these read GNRR and STE. Asparagine 60 serves as the catalytic Proton acceptor. Substrate is bound by residues tryptophan 61, arginine 63, arginine 171, and 177-179; that span reads RLS. Glutamate 190 is a Mg(2+) binding site.

This sequence belongs to the UPP synthase family. As to quaternary structure, homodimer. The cofactor is Mg(2+).

In terms of biological role, catalyzes the condensation of isopentenyl diphosphate (IPP) with allylic pyrophosphates generating different type of terpenoids. The sequence is that of Isoprenyl transferase (uppS) from Campylobacter jejuni subsp. jejuni serotype O:2 (strain ATCC 700819 / NCTC 11168).